The chain runs to 160 residues: Transcriptional repressor NrdR (160 aa).

A zinc finger spans residues 3–34 (CPYCQCEDTQVKDSRPAEEGAVIRRRRVCSVC). The 91-residue stretch at 49 to 139 (LLVLKKSGRR…VYRDFRNASD (91 aa)) folds into the ATP-cone domain.

It belongs to the NrdR family. The cofactor is Zn(2+).

Functionally, negatively regulates transcription of bacterial ribonucleotide reductase nrd genes and operons by binding to NrdR-boxes. This Bartonella bacilliformis (strain ATCC 35685 / KC583 / Herrer 020/F12,63) protein is Transcriptional repressor NrdR.